We begin with the raw amino-acid sequence, 549 residues long: Cation/acetate symporter ActP (549 aa).

The next 13 helical transmembrane spans lie at 33 to 53, 77 to 97, 103 to 123, 148 to 168, 183 to 203, 206 to 226, 262 to 282, 303 to 323, 355 to 375, 404 to 424, 428 to 448, 464 to 484, and 493 to 513; these read WQAI…TYWA, LAIA…ALVF, GLIY…LIAE, ILSA…QMVG, IAVV…GMLA, WVQI…AFMV, ISAL…PHIL, GFMG…IMLV, LFLG…VAGL, VSKI…VLFE, IAFM…PIIL, GGWL…TIWV, and IFPY…GIWF.

The protein belongs to the sodium:solute symporter (SSF) (TC 2.A.21) family.

The protein localises to the cell inner membrane. In terms of biological role, transports acetate. In Salmonella arizonae (strain ATCC BAA-731 / CDC346-86 / RSK2980), this protein is Cation/acetate symporter ActP.